A 106-amino-acid chain; its full sequence is Urease subunit beta (106 aa).

This sequence belongs to the urease beta subunit family. Heterotrimer of UreA (gamma), UreB (beta) and UreC (alpha) subunits. Three heterotrimers associate to form the active enzyme.

Its subcellular location is the cytoplasm. The enzyme catalyses urea + 2 H2O + H(+) = hydrogencarbonate + 2 NH4(+). It functions in the pathway nitrogen metabolism; urea degradation; CO(2) and NH(3) from urea (urease route): step 1/1. This chain is Urease subunit beta, found in Prochlorococcus marinus (strain NATL1A).